We begin with the raw amino-acid sequence, 230 residues long: Lactate utilization protein C (230 aa).

The protein belongs to the LutC/YkgG family.

Is involved in L-lactate degradation and allows cells to grow with lactate as the sole carbon source. This Halalkalibacterium halodurans (strain ATCC BAA-125 / DSM 18197 / FERM 7344 / JCM 9153 / C-125) (Bacillus halodurans) protein is Lactate utilization protein C.